Here is a 423-residue protein sequence, read N- to C-terminus: Phosphoribosylamine--glycine ligase (423 aa).

Positions 107-312 (KDLCARYDIP…LLPILYATAT (206 aa)) constitute an ATP-grasp domain. 133-193 (VRAQGAPIVI…EAFLDGEEAS (61 aa)) is a binding site for ATP. The Mg(2+) site is built by Glu-282 and Asn-284.

The protein belongs to the GARS family. It depends on Mg(2+) as a cofactor. The cofactor is Mn(2+).

It carries out the reaction 5-phospho-beta-D-ribosylamine + glycine + ATP = N(1)-(5-phospho-beta-D-ribosyl)glycinamide + ADP + phosphate + H(+). The protein operates within purine metabolism; IMP biosynthesis via de novo pathway; N(1)-(5-phospho-D-ribosyl)glycinamide from 5-phospho-alpha-D-ribose 1-diphosphate: step 2/2. The polypeptide is Phosphoribosylamine--glycine ligase (Agrobacterium fabrum (strain C58 / ATCC 33970) (Agrobacterium tumefaciens (strain C58))).